Consider the following 367-residue polypeptide: Choline-phosphate cytidylyltransferase A (367 aa).

Position 1 is an N-acetylmethionine (Met1). The segment at Met1–Ser32 is disordered. At Lys8 the chain carries N6-acetyllysine. CTP-binding residues include Ile84, Phe85, His92, and Lys122. Phosphocholine is bound by residues Lys122 and Trp151. The CTP site is built by His168, Asp169, Tyr173, Gln195, Arg196, Thr197, and Ile200. 2 amphipathic regions span residues Lys228–Gly287 and Ala298–Ser315. The residue at position 233 (Ser233) is a Phosphoserine. The segment at Ile272–Phe293 is autoinhibitory (AI). The interval Ala313–Asp367 is disordered. A phosphoserine mark is found at Ser315, Ser319, Ser321, Ser322, and Ser323. Polar residues predominate over residues Ser315–Pro324. Residues Ser319–Pro324 form repeat 1. A 3 X repeats region spans residues Ser319 to Pro348. Phosphothreonine is present on Thr325. Ser329, Ser331, and Ser333 each carry phosphoserine. A 2; approximate repeat occupies Ser329–Ser333. The span at Pro330 to Ser352 shows a compositional bias: low complexity. Position 342 is a phosphothreonine (Thr342). Phosphoserine occurs at positions 343, 345, 346, 347, 350, and 352. Repeat 3 spans residues Ser343–Pro348. Position 358 is a phosphothreonine (Thr358). The residue at position 362 (Ser362) is a Phosphoserine.

Belongs to the cytidylyltransferase family. As to quaternary structure, homodimer. The serine residues of the C-terminus are phosphorylated. The inactive soluble form is stabilized by phosphorylation, the active membrane bound form is promoted by anionic lipids or diacylglycerol, and is stabilized by dephosphorylation. Post-translationally, monoubiquitinated by the SCF(FBXL2) complex, leading to proteasomal degradation. Brain and liver (at protein level). Also found in heart, kidney, spleen, lung, skeletal muscle, ovary and testis.

Its subcellular location is the cytoplasm. The protein localises to the cytosol. It localises to the membrane. It is found in the endoplasmic reticulum membrane. The protein resides in the nucleus. The catalysed reaction is phosphocholine + CTP + H(+) = CDP-choline + diphosphate. Its pathway is phospholipid metabolism; phosphatidylcholine biosynthesis; phosphatidylcholine from phosphocholine: step 1/2. Interconverts between an inactive cytosolic form and an active membrane-bound form. Activation involves disruption of an inhibitory interaction between helices at the base of the active site and the autoinhibitory (AI) region. Its function is as follows. Catalyzes the key rate-limiting step in the CDP-choline pathway for phosphatidylcholine biosynthesis. This is Choline-phosphate cytidylyltransferase A (Pcyt1a) from Mus musculus (Mouse).